Reading from the N-terminus, the 163-residue chain is ATP synthase subunit b 1 (163 aa).

Residues Leu-5 to Leu-25 traverse the membrane as a helical segment.

This sequence belongs to the ATPase B chain family. In terms of assembly, F-type ATPases have 2 components, F(1) - the catalytic core - and F(0) - the membrane proton channel. F(1) has five subunits: alpha(3), beta(3), gamma(1), delta(1), epsilon(1). F(0) has three main subunits: a(1), b(2) and c(10-14). The alpha and beta chains form an alternating ring which encloses part of the gamma chain. F(1) is attached to F(0) by a central stalk formed by the gamma and epsilon chains, while a peripheral stalk is formed by the delta and b chains.

The protein resides in the cell inner membrane. Its function is as follows. F(1)F(0) ATP synthase produces ATP from ADP in the presence of a proton or sodium gradient. F-type ATPases consist of two structural domains, F(1) containing the extramembraneous catalytic core and F(0) containing the membrane proton channel, linked together by a central stalk and a peripheral stalk. During catalysis, ATP synthesis in the catalytic domain of F(1) is coupled via a rotary mechanism of the central stalk subunits to proton translocation. Component of the F(0) channel, it forms part of the peripheral stalk, linking F(1) to F(0). This is ATP synthase subunit b 1 from Rhizobium etli (strain CIAT 652).